The sequence spans 430 residues: Enolase (430 aa).

Residue glutamine 164 coordinates (2R)-2-phosphoglycerate. Catalysis depends on glutamate 208, which acts as the Proton donor. 3 residues coordinate Mg(2+): aspartate 245, glutamate 288, and aspartate 315. 4 residues coordinate (2R)-2-phosphoglycerate: lysine 340, arginine 369, serine 370, and lysine 391. The active-site Proton acceptor is lysine 340.

This sequence belongs to the enolase family. Requires Mg(2+) as cofactor.

The protein localises to the cytoplasm. The protein resides in the secreted. Its subcellular location is the cell surface. It carries out the reaction (2R)-2-phosphoglycerate = phosphoenolpyruvate + H2O. Its pathway is carbohydrate degradation; glycolysis; pyruvate from D-glyceraldehyde 3-phosphate: step 4/5. In terms of biological role, catalyzes the reversible conversion of 2-phosphoglycerate (2-PG) into phosphoenolpyruvate (PEP). It is essential for the degradation of carbohydrates via glycolysis. The polypeptide is Enolase (Thermococcus gammatolerans (strain DSM 15229 / JCM 11827 / EJ3)).